A 520-amino-acid chain; its full sequence is Amine oxidase [flavin-containing] B (520 aa).

At 1–489 (MNSKCDVVVV…TFLERHLPSV (489 aa)) the chain is on the cytoplasmic side. Lysine 52 carries the post-translational modification N6-acetyllysine. S-8alpha-FAD cysteine is present on cysteine 397. Residues 490-516 (PGLLRLIRLTTVVSAVALGFLAQKRGL) traverse the membrane as a helical; Anchor for type IV membrane protein segment. Residues 517 to 520 (LLRI) are Mitochondrial intermembrane-facing.

This sequence belongs to the flavin monoamine oxidase family. Monomer, homo- or heterodimer (containing two subunits of similar size). Each subunit contains a covalently bound flavin. Enzymatically active as monomer. FAD serves as cofactor.

Its subcellular location is the mitochondrion outer membrane. The catalysed reaction is a secondary aliphatic amine + O2 + H2O = a primary amine + an aldehyde + H2O2. The enzyme catalyses (R)-adrenaline + O2 + H2O = (R)-3,4-dihydroxymandelaldehyde + methylamine + H2O2. It catalyses the reaction a primary methyl amine + O2 + H2O = an aldehyde + H2O2 + NH4(+). It carries out the reaction benzylamine + O2 + H2O = benzaldehyde + H2O2 + NH4(+). The catalysed reaction is dopamine + O2 + H2O = 3,4-dihydroxyphenylacetaldehyde + H2O2 + NH4(+). The enzyme catalyses tyramine + O2 + H2O = (4-hydroxyphenyl)acetaldehyde + H2O2 + NH4(+). It catalyses the reaction (R)-noradrenaline + O2 + H2O = (R)-3,4-dihydroxymandelaldehyde + H2O2 + NH4(+). It carries out the reaction 2-phenylethylamine + O2 + H2O = 2-phenylacetaldehyde + H2O2 + NH4(+). The catalysed reaction is N-acetylputrescine + O2 + H2O = 4-acetamidobutanal + H2O2 + NH4(+). Catalyzes the oxidative deamination of primary and some secondary amines such as neurotransmitters, and exogenous amines including the tertiary amine, neurotoxin 1-methyl-4-phenyl-1,2,3,6-tetrahydropyridine (MPTP), with concomitant reduction of oxygen to hydrogen peroxide and participates in the metabolism of neuroactive and vasoactive amines in the central nervous system and peripheral tissues. Preferentially degrades benzylamine and phenylethylamine. The chain is Amine oxidase [flavin-containing] B from Cavia porcellus (Guinea pig).